A 710-amino-acid polypeptide reads, in one-letter code: Polyribonucleotide nucleotidyltransferase (710 aa).

2 residues coordinate Mg(2+): Asp489 and Asp495. Residues 556 to 615 (PKIDTIKIDVDKIKVVIGKGGETIDKIIAETGVKIDIDDEGNVSIYSSDQAAINRTKEII) form the KH domain. One can recognise an S1 motif domain in the interval 625-693 (GEVYHAKVVR…EKGRVDASMK (69 aa)). Positions 691–710 (SMKALIPRPPKPEKKEEKHD) are disordered. Positions 700–710 (PKPEKKEEKHD) are enriched in basic and acidic residues.

The protein belongs to the polyribonucleotide nucleotidyltransferase family. Mg(2+) is required as a cofactor.

It is found in the cytoplasm. It catalyses the reaction RNA(n+1) + phosphate = RNA(n) + a ribonucleoside 5'-diphosphate. Functionally, involved in mRNA degradation. Catalyzes the phosphorolysis of single-stranded polyribonucleotides processively in the 3'- to 5'-direction. This chain is Polyribonucleotide nucleotidyltransferase, found in Streptococcus pyogenes serotype M2 (strain MGAS10270).